The chain runs to 68 residues: Conotoxin Vx2 (68 aa).

Residues Met1–Ala20 form the signal peptide. A propeptide spanning residues Leu21 to Ala47 is cleaved from the precursor. 3 disulfide bridges follow: Cys55–Cys68, Cys56–Cys61, and Cys57–Cys65.

This sequence belongs to the conotoxin M superfamily. In terms of tissue distribution, expressed by the venom duct.

The protein resides in the secreted. In vivo, elicits a series of symptoms, such as being sedative, tail stiffening and twisted jumping, when injected intracranially into mice. The polypeptide is Conotoxin Vx2 (Conus vexillum (Flag cone)).